A 108-amino-acid chain; its full sequence is UPF0060 membrane protein SAB2216c (108 aa).

The next 4 helical transmembrane spans lie at 5–25, 31–51, 60–80, and 86–106; these read IFIFILAGLCEIGGGYLIWLW, CSLVGLIGGAILMLYGVIATF, VYAAYGGVFIIMSLIFAMVVD, and KYDVIGAIICIVGVLVMLLPS.

The protein belongs to the UPF0060 family.

The protein localises to the cell membrane. The sequence is that of UPF0060 membrane protein SAB2216c from Staphylococcus aureus (strain bovine RF122 / ET3-1).